The sequence spans 76 residues: UPF0346 protein LBA0976 (76 aa).

Belongs to the UPF0346 family.

The chain is UPF0346 protein LBA0976 from Lactobacillus acidophilus (strain ATCC 700396 / NCK56 / N2 / NCFM).